Here is an 87-residue protein sequence, read N- to C-terminus: Translation initiation factor IF-1 2 (87 aa).

In terms of domain architecture, S1-like spans 1–72 (MAKEEVIEME…TKGRINFRHK (72 aa)).

Belongs to the IF-1 family. In terms of assembly, component of the 30S ribosomal translation pre-initiation complex which assembles on the 30S ribosome in the order IF-2 and IF-3, IF-1 and N-formylmethionyl-tRNA(fMet); mRNA recruitment can occur at any time during PIC assembly.

It is found in the cytoplasm. One of the essential components for the initiation of protein synthesis. Stabilizes the binding of IF-2 and IF-3 on the 30S subunit to which N-formylmethionyl-tRNA(fMet) subsequently binds. Helps modulate mRNA selection, yielding the 30S pre-initiation complex (PIC). Upon addition of the 50S ribosomal subunit IF-1, IF-2 and IF-3 are released leaving the mature 70S translation initiation complex. This is Translation initiation factor IF-1 2 from Thiobacillus denitrificans (strain ATCC 25259 / T1).